Here is a 747-residue protein sequence, read N- to C-terminus: Polyribonucleotide nucleotidyltransferase (747 aa).

Mg(2+) is bound by residues Asp502 and Asp508. A KH domain is found at 569-628; the sequence is PRMLTITIDPDKIRDIIGPGGKIIKKIIEETGVEIDVEDDGRVFIASTDAAAGERALKII. Positions 638 to 712 constitute an S1 motif domain; sequence GKVYNGKVTR…PQGRLKLSRK (75 aa). The tract at residues 718-747 is disordered; it reads STVGEGGHRHFRRAGREGGHRGLNNRRQSR.

It belongs to the polyribonucleotide nucleotidyltransferase family. The cofactor is Mg(2+).

Its subcellular location is the cytoplasm. The catalysed reaction is RNA(n+1) + phosphate = RNA(n) + a ribonucleoside 5'-diphosphate. Functionally, involved in mRNA degradation. Catalyzes the phosphorolysis of single-stranded polyribonucleotides processively in the 3'- to 5'-direction. The sequence is that of Polyribonucleotide nucleotidyltransferase from Moorella thermoacetica (strain ATCC 39073 / JCM 9320).